The following is a 387-amino-acid chain: Protein kinase ORF16 (387 aa).

Residues 82 to 381 enclose the Protein kinase domain; the sequence is KKILSRVGPE…VTLMTELSLL (300 aa). K122 lines the ATP pocket. The active-site Proton acceptor is the D226.

Belongs to the protein kinase superfamily. Ser/Thr protein kinase family.

The catalysed reaction is L-seryl-[protein] + ATP = O-phospho-L-seryl-[protein] + ADP + H(+). It carries out the reaction L-threonyl-[protein] + ATP = O-phospho-L-threonyl-[protein] + ADP + H(+). This Ictalurid herpesvirus 1 (strain Auburn) (IcHV-1) protein is Protein kinase ORF16 (ORF16).